We begin with the raw amino-acid sequence, 288 residues long: MEPPDQCSQYMTSLLSPAVDDEKELQDMNAMVLSLTEEVKEEEEDAQPEPEQGTAAGEKLKSAGAQGGEEKDGGGEEKDGGGAGVPGHLWEGDLEGTSGSDGNVEDSDQSEKEPGQQYSRPQGAVGGLEPGNAQQPNVHAFTPLQLQELERIFQREQFPSEFLRRRLARSMNVTELAVQIWFENRRAKWRRHQRALMARNMLPFMAVGQPVMVTAAEAITAPLFISGMRDDYFWDHSHSSSLCFPMPPFPPPSLPLPLMLLPPMPPAGQAEFGPFPFVIVPSFTFPNV.

Residues 16-136 (SPAVDDEKEL…GLEPGNAQQP (121 aa)) form a disordered region. Positions 39–48 (VKEEEEDAQP) are enriched in acidic residues. A compositionally biased stretch (basic and acidic residues) spans 68-80 (GEEKDGGGEEKDG). The segment at residues 134-193 (QQPNVHAFTPLQLQELERIFQREQFPSEFLRRRLARSMNVTELAVQIWFENRRAKWRRHQ) is a DNA-binding region (homeobox). The short motif at 186-195 (RAKWRRHQRA) is the Nuclear localization signal element.

This sequence belongs to the paired-like homeobox family. PEPP subfamily. As to expression, testis. Not detected in epididymis nor placenta. In testis, mainly expressed in germ cells, but also detected in somatic cells such as Sertoli cells, Leydig cells and peritubular cells.

The protein localises to the nucleus. Functionally, transcription factor maybe involved in reproductive processes. Modulates expression of target genes encoding proteins involved in processes relevant to spermatogenesis. The protein is Rhox homeobox family member 2 of Homo sapiens (Human).